A 314-amino-acid polypeptide reads, in one-letter code: Homoserine kinase (314 aa).

95 to 105 serves as a coordination point for ATP; it reads PHSRGLGSSAA.

It belongs to the GHMP kinase family. Homoserine kinase subfamily.

The protein resides in the cytoplasm. It carries out the reaction L-homoserine + ATP = O-phospho-L-homoserine + ADP + H(+). The protein operates within amino-acid biosynthesis; L-threonine biosynthesis; L-threonine from L-aspartate: step 4/5. Catalyzes the ATP-dependent phosphorylation of L-homoserine to L-homoserine phosphate. The chain is Homoserine kinase from Mycolicibacterium vanbaalenii (strain DSM 7251 / JCM 13017 / BCRC 16820 / KCTC 9966 / NRRL B-24157 / PYR-1) (Mycobacterium vanbaalenii).